A 211-amino-acid polypeptide reads, in one-letter code: Probable metallo-hydrolase YqgX (211 aa).

The Zn(2+) site is built by His54, His56, Asp58, His59, His130, Asp149, and His190.

It belongs to the metallo-beta-lactamase superfamily. Glyoxalase II family. It depends on Zn(2+) as a cofactor.

In Bacillus subtilis (strain 168), this protein is Probable metallo-hydrolase YqgX (yqgX).